Consider the following 78-residue polypeptide: Structural DNA-binding protein p10 (78 aa).

The segment covering 1-25 has biased composition (low complexity); sequence MPTKAGTKSTANKKTTKGSSKSGSA. A disordered region spans residues 1–41; that stretch reads MPTKAGTKSTANKKTTKGSSKSGSARGHTGKTHAPPSMHSG.

Belongs to the asfivirus P10 family.

The protein resides in the virion. May play a role in genome packaging through direct interaction with viral DNA. Binds to ssDNA and dsDNA with the same apparent affinity in vitro. The chain is Structural DNA-binding protein p10 from African swine fever virus (isolate Warthog/Namibia/Wart80/1980) (ASFV).